The chain runs to 496 residues: uncharacterized protein (496 aa).

Residues aspartate 36, aspartate 81, glutamate 300, glutamate 302, aspartate 321, aspartate 323, and aspartate 375 each contribute to the Mg(2+) site.

The protein belongs to the XPG/RAD2 endonuclease family. FEN1 subfamily. Mg(2+) is required as a cofactor.

This is an uncharacterized protein from Schizosaccharomyces pombe (strain 972 / ATCC 24843) (Fission yeast).